The following is a 353-amino-acid chain: MANDQKNSESFPAKEDHKKDDAAAPAEVDHKDEFSASQPHPVENIVLVGRTGNGKSATGNSIVRSKVFKSKTKSSGVTMECHAVKAVTPEGPILNVIDTPGLFDLSVSAEFIGKEIVKCLTLADGGLHAVLLVLSVRTRISQEEEMVLSTLQVLFGSKIVDYLIVVFTGGDVLEDDGMTLEDYLGDNMPDFLKRVLILCGQRMILFDNKTKDDEKKTKQVHELLKLIDLVRKQNNNIPYTDEMYHMIKEENERHKKEQEELESKGHSEEQLAALMKELQIMNERNLKAMAEMMEKNMKIAMEAQEKLFEQREKAQEMSYQQKMEMQEKLKQMEGRMRAEMEAQMLSRQQCSIL.

Residues 1-10 (MANDQKNSES) show a composition bias toward polar residues. The interval 1 to 43 (MANDQKNSESFPAKEDHKKDDAAAPAEVDHKDEFSASQPHPVE) is disordered. The segment covering 12-34 (PAKEDHKKDDAAAPAEVDHKDEF) has biased composition (basic and acidic residues). The AIG1-type G domain maps to 40 to 248 (HPVENIVLVG…YTDEMYHMIK (209 aa)). Residues 49 to 56 (GRTGNGKS) are G1. GTP is bound by residues 49–57 (GRTGNGKSA) and S70. Positions 76–80 (GVTME) are G2. The tract at residues 98–101 (DTPG) is G3. The tract at residues 168–171 (TGGD) is G4. The interval 207-209 (DNK) is G5. Residue N208 participates in GTP binding. Positions 244-291 (YHMIKEENERHKKEQEELESKGHSEEQLAALMKELQIMNERNLKAMAE) form a coiled coil.

It belongs to the TRAFAC class TrmE-Era-EngA-EngB-Septin-like GTPase superfamily. AIG1/Toc34/Toc159-like paraseptin GTPase family. IAN subfamily. Mainly expressed in leaves.

The sequence is that of Immune-associated nucleotide-binding protein 8 from Arabidopsis thaliana (Mouse-ear cress).